A 148-amino-acid chain; its full sequence is Ferredoxin-thioredoxin reductase catalytic chain, chloroplastic (148 aa).

The N-terminal 35 residues, 1-35, are a transit peptide targeting the chloroplast; sequence MKALQASTSYSFFSKSSSATLQRRTHRPQCVILSK. Position 87 (cysteine 87) interacts with [4Fe-4S] cluster. The active-site Nucleophile is the cysteine 89. Cysteine 89 and cysteine 119 form a disulfide bridge. Residues cysteine 106, cysteine 108, and cysteine 117 each contribute to the [4Fe-4S] cluster site.

It belongs to the ferredoxin thioredoxin reductase beta subunit family. In terms of assembly, heterodimer of subunit A (variable subunit) and subunit B (catalytic subunit). Heterodimeric FTR forms a complex with ferredoxin and thioredoxin. [4Fe-4S] cluster is required as a cofactor.

The protein resides in the plastid. It localises to the chloroplast. The enzyme catalyses [thioredoxin]-disulfide + 2 reduced [2Fe-2S]-[ferredoxin] + 2 H(+) = [thioredoxin]-dithiol + 2 oxidized [2Fe-2S]-[ferredoxin]. In terms of biological role, catalytic subunit of the ferredoxin-thioredoxin reductase (FTR), which catalyzes the two-electron reduction of thioredoxins by the electrons provided by reduced ferredoxin. This chain is Ferredoxin-thioredoxin reductase catalytic chain, chloroplastic, found in Spinacia oleracea (Spinach).